Here is a 127-residue protein sequence, read N- to C-terminus: Glycine cleavage system H protein 1 (127 aa).

Residues 20–101 form the Lipoyl-binding domain; the sequence is LLTVGITAYA…LGEAWFFRFR (82 aa). Lys-60 bears the N6-lipoyllysine mark.

It belongs to the GcvH family. The glycine cleavage system is composed of four proteins: P, T, L and H. The cofactor is (R)-lipoate.

Functionally, the glycine cleavage system catalyzes the degradation of glycine. The H protein shuttles the methylamine group of glycine from the P protein to the T protein. This Pseudomonas aeruginosa (strain ATCC 15692 / DSM 22644 / CIP 104116 / JCM 14847 / LMG 12228 / 1C / PRS 101 / PAO1) protein is Glycine cleavage system H protein 1.